A 183-amino-acid chain; its full sequence is GTP cyclohydrolase 1 (183 aa).

Residues Cys71, His74, and Cys142 each coordinate Zn(2+).

Belongs to the GTP cyclohydrolase I family. Toroid-shaped homodecamer, composed of two pentamers of five dimers.

The catalysed reaction is GTP + H2O = 7,8-dihydroneopterin 3'-triphosphate + formate + H(+). Its pathway is cofactor biosynthesis; 7,8-dihydroneopterin triphosphate biosynthesis; 7,8-dihydroneopterin triphosphate from GTP: step 1/1. The polypeptide is GTP cyclohydrolase 1 (Leptospira interrogans serogroup Icterohaemorrhagiae serovar copenhageni (strain Fiocruz L1-130)).